The chain runs to 436 residues: Antilisterial bacteriocin subtilosin biosynthesis protein AlbD (436 aa).

Helical transmembrane passes span I27–I47, T55–S75, L113–T133, L134–L154, L164–P184, T187–L207, A240–M260, I270–I290, F315–S335, and A395–V415.

It is found in the cell membrane. Involved in the production of the bacteriocin subtilosin. Required for immunity to subtilosin. In Bacillus subtilis (strain 168), this protein is Antilisterial bacteriocin subtilosin biosynthesis protein AlbD (albD).